A 112-amino-acid chain; its full sequence is DNA-binding protein Bv3F (112 aa).

A disordered region spans residues 65–92; the sequence is KRNSKRMSTVPKYRDPATGKTWSGRGRQ. 2 DNA-binding regions span residues 89 to 94 and 89 to 95; these read RGRQPA and RGRQPAW.

The protein belongs to the histone-like protein H-NS family. As to quaternary structure, homodimer that oligomerizes on DNA into higher-order complexes that form bridges between disparate regions of DNA compacting it.

It localises to the cytoplasm. The protein localises to the nucleoid. Functionally, a DNA-binding protein implicated in transcriptional repression and chromosome organization and compaction. Binds in the minor groove of AT-rich DNA. Binds nucleation sites in AT-rich DNA and bridges them, forming higher-order nucleoprotein complexes and condensing the chromosome. As many horizontally transferred genes are AT-rich, it plays a central role in silencing foreign genes. This is DNA-binding protein Bv3F from Burkholderia vietnamiensis (strain G4 / LMG 22486) (Burkholderia cepacia (strain R1808)).